The following is a 653-amino-acid chain: DNA ligase (653 aa).

NAD(+) is bound by residues 32–36 (NFEYD) and 80–81 (SL). Lys-104 (N6-AMP-lysine intermediate) is an active-site residue. 3 residues coordinate NAD(+): Arg-125, Glu-159, and Lys-297. 4 residues coordinate Zn(2+): Cys-386, Cys-389, Cys-406, and Cys-411. In terms of domain architecture, BRCT spans 571 to 653 (GGSEKLKGLT…EEFIQLLNEA (83 aa)).

Belongs to the NAD-dependent DNA ligase family. LigA subfamily. The cofactor is Mg(2+). Mn(2+) serves as cofactor.

It catalyses the reaction NAD(+) + (deoxyribonucleotide)n-3'-hydroxyl + 5'-phospho-(deoxyribonucleotide)m = (deoxyribonucleotide)n+m + AMP + beta-nicotinamide D-nucleotide.. DNA ligase that catalyzes the formation of phosphodiester linkages between 5'-phosphoryl and 3'-hydroxyl groups in double-stranded DNA using NAD as a coenzyme and as the energy source for the reaction. It is essential for DNA replication and repair of damaged DNA. The polypeptide is DNA ligase (Lachnoclostridium phytofermentans (strain ATCC 700394 / DSM 18823 / ISDg) (Clostridium phytofermentans)).